Here is a 229-residue protein sequence, read N- to C-terminus: DNA repair protein RecO (229 aa).

It belongs to the RecO family.

Its function is as follows. Involved in DNA repair and RecF pathway recombination. The polypeptide is DNA repair protein RecO (Legionella pneumophila (strain Corby)).